The primary structure comprises 479 residues: Glycogen synthase (479 aa).

An ADP-alpha-D-glucose-binding site is contributed by Lys15.

This sequence belongs to the glycosyltransferase 1 family. Bacterial/plant glycogen synthase subfamily.

It catalyses the reaction [(1-&gt;4)-alpha-D-glucosyl](n) + ADP-alpha-D-glucose = [(1-&gt;4)-alpha-D-glucosyl](n+1) + ADP + H(+). It functions in the pathway glycan biosynthesis; glycogen biosynthesis. Its function is as follows. Synthesizes alpha-1,4-glucan chains using ADP-glucose. This Clostridium beijerinckii (strain ATCC 51743 / NCIMB 8052) (Clostridium acetobutylicum) protein is Glycogen synthase.